The following is a 618-amino-acid chain: UvrABC system protein C (618 aa).

Residues 13–92 (DKPGVYLMKN…IKKYRPKYNI (80 aa)) form the GIY-YIG domain. The 36-residue stretch at 204–239 (LDIVENFKLNMEKAAENLEFEKAAMLRDKINIIEKI) folds into the UVR domain.

The protein belongs to the UvrC family. Interacts with UvrB in an incision complex.

The protein localises to the cytoplasm. Its function is as follows. The UvrABC repair system catalyzes the recognition and processing of DNA lesions. UvrC both incises the 5' and 3' sides of the lesion. The N-terminal half is responsible for the 3' incision and the C-terminal half is responsible for the 5' incision. In Clostridium botulinum (strain Kyoto / Type A2), this protein is UvrABC system protein C.